We begin with the raw amino-acid sequence, 606 residues long: Zinc finger protein 652 (606 aa).

Ser-57 is subject to Phosphoserine. Positions His-71 to Arg-97 are enriched in basic and acidic residues. Disordered regions lie at residues His-71 to Lys-113 and Val-130 to Gln-235. Residues Glu-98–Glu-109 are compositionally biased toward acidic residues. The residue at position 100 (Ser-100) is a Phosphoserine. The residue at position 103 (Thr-103) is a Phosphothreonine. Residues Val-137 to Thr-149 show a composition bias toward polar residues. Residues Glu-152 to Gly-170 show a composition bias toward acidic residues. A compositionally biased stretch (basic and acidic residues) spans Glu-171–Glu-183. Low complexity predominate over residues Lys-184–Thr-209. 2 positions are modified to phosphoserine: Ser-197 and Ser-204. The segment at Leu-245–His-268 adopts a C2H2-type 1 zinc-finger fold. The C2H2-type 2; degenerate zinc finger occupies Gln-272–Asp-294. 6 C2H2-type zinc fingers span residues Ile-299–His-322, Phe-329–His-351, Phe-357–His-379, Phe-385–His-407, Phe-413–His-435, and Phe-441–His-463. The C2H2-type 9; degenerate zinc-finger motif lies at Tyr-469–Phe-492. The mediates interaction with CBFA2T3 stretch occupies residues Val-498–His-606.

Belongs to the krueppel C2H2-type zinc-finger protein family. As to quaternary structure, interacts with CBFA2T3. In terms of tissue distribution, widely expressed with higher expression in breast, prostate, vulva and pancreas.

It localises to the nucleus. In terms of biological role, functions as a transcriptional repressor. The protein is Zinc finger protein 652 (ZNF652) of Homo sapiens (Human).